A 116-amino-acid chain; its full sequence is Large ribosomal subunit protein uL18 (116 aa).

It belongs to the universal ribosomal protein uL18 family. As to quaternary structure, part of the 50S ribosomal subunit; part of the 5S rRNA/L5/L18/L25 subcomplex. Contacts the 5S and 23S rRNAs.

Functionally, this is one of the proteins that bind and probably mediate the attachment of the 5S RNA into the large ribosomal subunit, where it forms part of the central protuberance. This is Large ribosomal subunit protein uL18 from Shewanella sediminis (strain HAW-EB3).